A 259-amino-acid polypeptide reads, in one-letter code: Large ribosomal subunit protein uL4 (259 aa).

A disordered region spans residues 47–67 (WGTDPMAGKRTTAESFGSGRG).

It belongs to the universal ribosomal protein uL4 family. As to quaternary structure, part of the 50S ribosomal subunit.

Its function is as follows. One of the primary rRNA binding proteins, this protein initially binds near the 5'-end of the 23S rRNA. It is important during the early stages of 50S assembly. It makes multiple contacts with different domains of the 23S rRNA in the assembled 50S subunit and ribosome. Forms part of the polypeptide exit tunnel. The sequence is that of Large ribosomal subunit protein uL4 from Methanosphaera stadtmanae (strain ATCC 43021 / DSM 3091 / JCM 11832 / MCB-3).